A 249-amino-acid polypeptide reads, in one-letter code: MRQKIVAGNWKMNGQIQQVTELVSQIEELIGFDCAAQVAVMPPSIYIPKVRDCLRTGKIVVGAQNVYPKDYGAYTGELSAPMLKDFDCRYVLVGHSERRQFFHEDENFVAQKFHHVKDHGMIPVLCVGETLSERENGKTEQVIAQQVLAVSAKGKDCFRDCVVAYEPVWAIGTGKTATPEQAQKIHQFIRDLVGEINDSDAKHLTLIYGGSVNENNAKALFSMPDIDGGLVGGASLNAKQFVEIVKCIN.

9–11 (NWK) serves as a coordination point for substrate. The active-site Electrophile is His-95. Catalysis depends on Glu-166, which acts as the Proton acceptor. Substrate-binding positions include Gly-172, Ser-211, and 232 to 233 (GG).

This sequence belongs to the triosephosphate isomerase family. Homodimer.

The protein localises to the cytoplasm. The enzyme catalyses D-glyceraldehyde 3-phosphate = dihydroxyacetone phosphate. The protein operates within carbohydrate biosynthesis; gluconeogenesis. It functions in the pathway carbohydrate degradation; glycolysis; D-glyceraldehyde 3-phosphate from glycerone phosphate: step 1/1. Its function is as follows. Involved in the gluconeogenesis. Catalyzes stereospecifically the conversion of dihydroxyacetone phosphate (DHAP) to D-glyceraldehyde-3-phosphate (G3P). In Legionella pneumophila subsp. pneumophila (strain Philadelphia 1 / ATCC 33152 / DSM 7513), this protein is Triosephosphate isomerase.